Reading from the N-terminus, the 573-residue chain is N(2)-(2-carboxyethyl)arginine synthase (573 aa).

Substrate contacts are provided by Tyr271 and Asp301. A thiamine diphosphate-binding site is contributed by 410–413 (IGFF). Residue 414–415 (RH) coordinates substrate. A thiamine diphosphate-binding site is contributed by 436–438 (SSF). Asp463 is a binding site for Mg(2+). Thiamine diphosphate is bound by residues 464-465 (GG), 490-495 (NDTNGL), and Tyr561. The Mg(2+) site is built by Asn490 and Thr492. Leu571 is a substrate binding site.

Homotetramer; dimer of dimers. Requires Mg(2+) as cofactor. It depends on thiamine diphosphate as a cofactor.

The catalysed reaction is D-glyceraldehyde 3-phosphate + L-arginine = N(2)-(2-carboxyethyl)-L-arginine + phosphate + H(+). Involved in the biosynthesis of the beta-lactamase inhibitor, clavulanic acid. Catalyzes the thiamine diphosphate (ThDP) dependent condensation of D-glyceraldehyde-3-phosphate (D-G3P) with L-arginine to yield the beta-amino acid, N2-(2-carboxyethyl)arginine (CEA) via a beta-elimination resulting in the formation of an enol which undergoes a second elimination to generate the alpha,beta-unsaturated acryloyl-ThDP. The protein is N(2)-(2-carboxyethyl)arginine synthase of Streptomyces clavuligerus.